We begin with the raw amino-acid sequence, 216 residues long: Probable nicotinate-nucleotide adenylyltransferase (216 aa).

It belongs to the NadD family.

It carries out the reaction nicotinate beta-D-ribonucleotide + ATP + H(+) = deamido-NAD(+) + diphosphate. The protein operates within cofactor biosynthesis; NAD(+) biosynthesis; deamido-NAD(+) from nicotinate D-ribonucleotide: step 1/1. Its function is as follows. Catalyzes the reversible adenylation of nicotinate mononucleotide (NaMN) to nicotinic acid adenine dinucleotide (NaAD). The sequence is that of Probable nicotinate-nucleotide adenylyltransferase from Geobacter metallireducens (strain ATCC 53774 / DSM 7210 / GS-15).